A 668-amino-acid polypeptide reads, in one-letter code: DNA ligase (668 aa).

Residues 34 to 38 (DAEYD), 83 to 84 (SL), and glutamate 113 each bind NAD(+). Lysine 115 acts as the N6-AMP-lysine intermediate in catalysis. 4 residues coordinate NAD(+): arginine 136, glutamate 170, lysine 286, and lysine 310. Zn(2+)-binding residues include cysteine 404, cysteine 407, cysteine 422, and cysteine 427. A BRCT domain is found at 590-668 (DSDSYFAGKT…EEQLMGELKK (79 aa)).

It belongs to the NAD-dependent DNA ligase family. LigA subfamily. Mg(2+) is required as a cofactor. Mn(2+) serves as cofactor.

The catalysed reaction is NAD(+) + (deoxyribonucleotide)n-3'-hydroxyl + 5'-phospho-(deoxyribonucleotide)m = (deoxyribonucleotide)n+m + AMP + beta-nicotinamide D-nucleotide.. Functionally, DNA ligase that catalyzes the formation of phosphodiester linkages between 5'-phosphoryl and 3'-hydroxyl groups in double-stranded DNA using NAD as a coenzyme and as the energy source for the reaction. It is essential for DNA replication and repair of damaged DNA. This Bacillus subtilis (strain 168) protein is DNA ligase.